The primary structure comprises 24 residues: Snake venom metalloproteinase Batx-1 (24 aa).

In terms of domain architecture, Peptidase M12B spans 1-24 (YIELAVVADHGIFTKYNSNLNTIR). A Ca(2+)-binding site is contributed by E3.

Belongs to the venom metalloproteinase (M12B) family. P-I subfamily. In terms of assembly, monomer. It depends on Zn(2+) as a cofactor. Post-translationally, the N-terminus is blocked. In terms of processing, contains 3 disulfide bonds. In terms of tissue distribution, expressed by the venom gland.

It localises to the secreted. With respect to regulation, inhibited by EDTA, and o-phenanthroline, but not inhibited by PMSF, pepstatin A, and aprotinin. Functionally, zinc metalloproteinase that exhits a weak hemorrhagic activity. Degrades preferentially the Aalpha- (FGA) and Bbeta-chains (FGB) of fibrinogen, and partially degrades gamma-chain (FGG) at higher concentration. Induces a mild myotoxicity, but lacks coagulant activity on human plasma or bovin fibrinogen and defibrinating activity. The chain is Snake venom metalloproteinase Batx-1 from Bothrops atrox (Barba amarilla).